The chain runs to 425 residues: Tyrosine--tRNA ligase (425 aa).

L-tyrosine is bound at residue tyrosine 37. Residues 42–51 (PTADSLHLGH) carry the 'HIGH' region motif. L-tyrosine-binding residues include tyrosine 175 and glutamine 179. The 'KMSKS' region motif lies at 235–239 (KFGKT). Lysine 238 serves as a coordination point for ATP. In terms of domain architecture, S4 RNA-binding spans 357-415 (QDLQQALVNAELAPSRGQARKLIEAKSVSINGSLQTDAEYTFGEDDRLFGQYTLLRRGK).

This sequence belongs to the class-I aminoacyl-tRNA synthetase family. TyrS type 1 subfamily. In terms of assembly, homodimer.

The protein localises to the cytoplasm. The enzyme catalyses tRNA(Tyr) + L-tyrosine + ATP = L-tyrosyl-tRNA(Tyr) + AMP + diphosphate + H(+). Its function is as follows. Catalyzes the attachment of tyrosine to tRNA(Tyr) in a two-step reaction: tyrosine is first activated by ATP to form Tyr-AMP and then transferred to the acceptor end of tRNA(Tyr). The sequence is that of Tyrosine--tRNA ligase from Erwinia tasmaniensis (strain DSM 17950 / CFBP 7177 / CIP 109463 / NCPPB 4357 / Et1/99).